Reading from the N-terminus, the 185-residue chain is Uroplakin-2 (185 aa).

The N-terminal stretch at 1–26 (MASPWPVWTLSWILILLAVLVPGAAA) is a signal peptide. The propeptide occupies 27 to 85 (DFNISSLSGLLSPVMTESLLVALPPCHLTGGNATLTVRRANDSKVVRSSFVVPPCRGRR). N-linked (GlcNAc...) asparagine glycosylation is found at Asn29, Asn58, and Asn67. At 86 to 156 (ELVSVVDSGS…IGLAMARTGG (71 aa)) the chain is on the lumenal side. Residues 157 to 177 (MVVITVLLSVAMFLLVLGLII) form a helical membrane-spanning segment. At 178–185 (ALALGARK) the chain is on the cytoplasmic side.

It belongs to the uroplakin-2 family. Interacts with uroplakin-1a (UPK1A). Bladder epithelium.

It is found in the cell membrane. Its function is as follows. Component of the asymmetric unit membrane (AUM); a highly specialized biomembrane elaborated by terminally differentiated urothelial cells. May play an important role in regulating the assembly of the AUM. This Bos taurus (Bovine) protein is Uroplakin-2 (UPK2).